A 151-amino-acid chain; its full sequence is Protein A151R (151 aa).

The protein belongs to the asfivirus A151R family. As to quaternary structure, monomer. Homodimer. Interacts with protein B119L. Interacts with membrane protein E248R. It depends on Zn(2+) as a cofactor.

May participate in a redox cascade for the formation of disulfide bonds in viral proteins. The polypeptide is Protein A151R (Ornithodoros (relapsing fever ticks)).